The primary structure comprises 35 residues: Mu-thomitoxin-Hme1c (35 aa).

Disulfide bonds link Cys2–Cys18, Cys9–Cys23, and Cys17–Cys34.

The protein belongs to the neurotoxin 07 (Beta/delta-agtx) family. As to expression, expressed by the venom gland.

It localises to the secreted. Its function is as follows. Gating-modifier toxin that inhibits mammalian and insect voltage-gated sodium channels. It shifts the voltage dependence of channel activation to more positive voltages. It shows potent activity on Nav1.4/SCN4A (IC(50)=103 nM), Nav1.5/SCN5A (IC(50)=268 nM) and Para/DmNav1 (IC(50)=555 nM) and lower activities on Nav1.2/SCN2A (IC(50)=1447 nM) and Nav1.6/SCN8A (IC(50)=3504 nM). In addition, at a concentration of 1 uM, the toxin inhibits 90-100% of sodium current through Nav1.2/SCN2A, Nav1.4/SCN4A, Nav1.5/SCN5A, Nav1.6/SCN8A and Para/DmNav1 channels, when the voltage of maximal activation of the channel in control conditions is applied. It binds to the S3-S4 helix-loop-helix motif in the voltage-sensing domain of repeat 1 (shown on hNav1.4/SCN4A). The toxin is amphiphilic and binds to both neutral and negatively charged lipid vesicles with high affinity. The hydrophobic face lies on the opposite side to the hydrophobic faces of classical gating modifiers. This is Mu-thomitoxin-Hme1c from Heriaeus mellotteei (Crab spider).